Here is a 213-residue protein sequence, read N- to C-terminus: Protein SRN2 (213 aa).

Positions 128-213 (SKYVASWQDY…TWDKQGNLKY (86 aa)) constitute a VPS37 C-terminal domain.

This sequence belongs to the VPS37 family. As to quaternary structure, component of the ESCRT-I complex (endosomal sorting complex required for transport I) which consists of STP22, VPS28, SRN2 and MVB12 in a 1:1:1:1 stoichiometry. Interacts with STP22 and MVB12.

Its subcellular location is the cytoplasm. It localises to the endosome. The protein localises to the late endosome membrane. Its function is as follows. Component of the ESCRT-I complex, a regulator of vesicular trafficking process. Required for normal endocytic and biosynthetic traffic to the yeast vacuole. In Saccharomyces cerevisiae (strain ATCC 204508 / S288c) (Baker's yeast), this protein is Protein SRN2 (SRN2).